An 812-amino-acid chain; its full sequence is Protein FAM83G (812 aa).

Ala2 is modified (N-acetylalanine). A DUF1669 region spans residues Ala2 to Leu312. Ser4 bears the Phosphoserine mark. Residues Pro76 to Tyr119 form a disordered region. Residues Glu79–Pro90 show a composition bias toward basic and acidic residues. Residues Ser124, Ser127, and Ser356 each carry the phosphoserine modification. Disordered regions lie at residues Lys362–Ser389, Ala455–Thr509, and Ser521–Pro812. The segment covering Ala455–Gly467 has biased composition (polar residues). Residues Cys471–Pro480 show a composition bias toward pro residues. The span at Ser545 to Gln562 shows a compositional bias: polar residues. The segment covering Leu576–Tyr586 has biased composition (acidic residues). Over residues Leu589 to Ser598 the composition is skewed to low complexity. A phosphoserine mark is found at Ser609, Ser613, Ser615, and Ser649. Residues Ser721–Ala731 show a composition bias toward low complexity. Residues Leu761–Ala772 are compositionally biased toward basic and acidic residues.

It belongs to the FAM83 family. As to quaternary structure, interacts with SMAD1 (via MH2 domain); in a SMAD4-independent manner. Directly interacts (via DUF1669) with casein kinase isoforms CSNK1A1 and CSNK1A1L. In terms of processing, BMP signaling induces the phosphorylation by BMPR1A at Ser-609, Ser-613 and Ser-615. Phosphorylation at Ser-609 is necessary for the activation of SMAD4-independent BMP target genes such as NEDD9 and ASNS. Post-translationally, phosphorylated by CSNK1A1.

It is found in the cytoplasm. Its subcellular location is the cytosol. The protein localises to the nucleus. Substrate for type I BMP receptor kinase involved in regulation of some target genes of the BMP signaling pathway. Also regulates the expression of several non-BMP target genes, suggesting a role in other signaling pathways. This is Protein FAM83G (Fam83g) from Mus musculus (Mouse).